Reading from the N-terminus, the 1030-residue chain is F-box/WD repeat-containing protein 10 (1030 aa).

The F-box domain occupies 280 to 329; that stretch reads RDFIRDLPLHLSKYILRMLDKHSLNRCIFVSQHWATLAQQVKVDQSMHSF. 5 WD repeats span residues 466 to 505, 508 to 547, 549 to 584, 587 to 624, and 626 to 667; these read GHAG…CVRI, GHQG…KTFK, KDPI…LQKT, GHEG…ERCL, and AFKH…KVIK. A disordered region spans residues 709-773; sequence KNKVKKSKDK…LSSDDMETPV (65 aa). Residues 716–733 show a composition bias toward basic and acidic residues; the sequence is KDKEEEREETSLGDEHSR. Residues 734–749 are compositionally biased toward polar residues; sequence STIQGHSLKDSVSSKQ. A coiled-coil region spans residues 963–992; it reads FMLMTVKEEKEFAEAKMKEYEASVSTKEVD.

Its function is as follows. Probable substrate-recognition component of a SCF (SKP1-CUL1-F-box protein)-type E3 ubiquitin ligase complex which mediates the ubiquitination and subsequent proteasomal degradation of target proteins. Overexpression is leading to degradation of CBX5 and CBX1. The polypeptide is F-box/WD repeat-containing protein 10 (Fbxw10) (Mus musculus (Mouse)).